A 150-amino-acid polypeptide reads, in one-letter code: Putative antitoxin VapB45 (150 aa).

A disordered region spans residues 124 to 150; the sequence is AQRPVAAGRPRPRPQRPVSDRVSDQRR. Over residues 141-150 the composition is skewed to basic and acidic residues; the sequence is VSDRVSDQRR.

It belongs to the phD/YefM antitoxin family.

Functionally, possibly the antitoxin component of a type II toxin-antitoxin (TA) system. Its cognate toxin is VapC45 (Potential). This chain is Putative antitoxin VapB45 (vapB45), found in Mycobacterium tuberculosis (strain CDC 1551 / Oshkosh).